Here is a 362-residue protein sequence, read N- to C-terminus: MTTPLTLENISQAPKALLHDHLDGGLRPSTVLELAGQYGYDDLPADDVDELATFFRTAAHSGSLVRYLEPFAHTVGVMQTAEALHRVAFECVEDLAGDNVVYAEVRFAPELHIEGGMGLDAVVDAVLAGFADGEKAAASAGRTITVRCLVTAMRHAARSREIAELAIRFRDRGVVGFDIAGAEAGYPPTRHLDAFEYMRGNNARFTIHAGEAFGLPSIHEAIAFCGADRLGHGVRIVDDITVAPDGQVKLGRLAAILRDKRIPLELCPSSNVQTGAVASIAEHPFDLLARTRFRVTVNTDNRLMSDTTMSQEMLRLVEAFGYGWSDLARFTINAMKSSFIPFDERLALIDDVIKPRYAVLAG.

2 residues coordinate Zn(2+): His19 and His21. Substrate-binding residues include His21, Asp23, and Gly181. Residue His208 participates in Zn(2+) binding. Glu211 acts as the Proton donor in catalysis. Zn(2+) is bound at residue Asp300.

It belongs to the metallo-dependent hydrolases superfamily. Adenosine and AMP deaminases family. Adenosine deaminase subfamily. Zn(2+) is required as a cofactor.

The enzyme catalyses adenosine + H2O + H(+) = inosine + NH4(+). It carries out the reaction 2'-deoxyadenosine + H2O + H(+) = 2'-deoxyinosine + NH4(+). Catalyzes the hydrolytic deamination of adenosine and 2-deoxyadenosine. This Mycobacterium sp. (strain JLS) protein is Adenosine deaminase.